The sequence spans 2671 residues: Inositol 1,4,5-trisphosphate-gated calcium channel ITPR3 (2671 aa).

The Cytoplasmic segment spans residues 1–2202 (MSEMSSFLHI…LIYWFSRRMT (2202 aa)). MIR domains lie at 113–173 (GDVV…LRSN), 174–224 (GDNV…INLF), 232–288 (EEVL…VEVV), 295–372 (GGAG…LDPT), and 378–434 (DSFV…IVSV). 4 residues coordinate 1D-myo-inositol 1,4,5-trisphosphate: arginine 266, threonine 268, leucine 269, and arginine 270. The disordered stretch occupies residues 322-342 (SYKGDASDPKAAGMGAQGRTG). 1D-myo-inositol 1,4,5-trisphosphate-binding residues include arginine 503, lysine 507, arginine 510, tyrosine 567, arginine 568, and lysine 569. Arginine 743 serves as a coordination point for Ca(2+). A phosphoserine mark is found at serine 916 and serine 934. Residues glutamate 1122 and glutamate 1125 each coordinate Ca(2+). Disordered stretches follow at residues 1132 to 1163 (GSGK…PPGE) and 1809 to 1848 (NDLG…GPSL). Phosphoserine is present on residues serine 1813, serine 1832, and serine 1834. Residues glutamate 1882 and glutamate 1946 each contribute to the Ca(2+) site. ATP contacts are provided by alanine 1996, glutamate 2149, and lysine 2152. Residues 2203–2223 (LWGSISFNLAVFINIIIAFFY) traverse the membrane as a helical segment. The Extracellular portion of the chain corresponds to 2224–2235 (PYMEGASTGVLD). A helical transmembrane segment spans residues 2236–2256 (SPLISLLFWILICFSIAALFT). The Cytoplasmic segment spans residues 2257 to 2264 (KRYSIRPL). The helical transmembrane segment at 2265 to 2285 (IVALILRSIYYLGIGPTLNIL) threads the bilayer. Residues 2286–2325 (GALNLTNKIVFVVSFVGNRGTFIRGYKAMVMDMEFLYHVG) are Extracellular-facing. The chain crosses the membrane as a helical span at residues 2326-2346 (YILTSVLGLFAHELFYSILLF). The Cytoplasmic portion of the chain corresponds to 2347–2368 (DLIYREETLFNVIKSVTRNGRS). Residues 2369–2389 (ILLTALLALILVYLFSIVGFL) form a helical membrane-spanning segment. Over 2390–2496 (FLKDDFILEV…ESLFPARVVY (107 aa)) the chain is Extracellular. Cysteines 2455 and 2461 form a disulfide. The chain crosses the membrane as a helical span at residues 2497–2517 (DLLFFFIVIIIVLNLIFGVII). Residues 2518–2671 (DTFADLRSEK…FVDVQNCISR (154 aa)) lie on the Cytoplasmic side of the membrane. The ATP site is built by cysteine 2538 and phenylalanine 2539. Residue cysteine 2538 coordinates Zn(2+). Zn(2+) is bound by residues cysteine 2541 and histidine 2558. Residues lysine 2560, histidine 2563, asparagine 2564, and methionine 2565 each contribute to the ATP site. A Zn(2+)-binding site is contributed by histidine 2563. Threonine 2581 is a binding site for Ca(2+). 2 positions are modified to phosphoserine: serine 2609 and serine 2670.

It belongs to the InsP3 receptor family. Homotetramer. Homodimer. Interacts with TRPC1, TRPC3 and TRPC4. Interacts with TRPV4. Interacts with SIGMAR1. Interacts with PML and AKT1. Interacts with IRAG2 (via coiled-coil domain). Interacts with CABP1. Interacts with TMBIM4/LFG4. Interacts with CEMIP. Interacts with TESPA1. Interacts with TMEM203. Interacts with BOK; regulates ITPR3 expression. Interacts with BCL2L10. Interacts with CHGA and CHGB. In terms of processing, phosphorylated by AKT1 on serine and/or threonine residues. Expressed in intestinal crypt and villus epithelial cells.

It localises to the endoplasmic reticulum membrane. The protein resides in the cytoplasmic vesicle. The protein localises to the secretory vesicle membrane. It carries out the reaction Ca(2+)(in) = Ca(2+)(out). Its activity is regulated as follows. Inositol 1,4,5-trisphosphate-gated calcium channel is regulated by cytosolic calcium in a biphasic manner. At low concentrations, cytosolic calcium binds at a high-affinity juxtamembrane domain (JD) calcium binding site, allowing ITPR3 to activate by escaping a low-energy resting state through an ensemble of preactivated states. At high cytosolic calcium concentrations, ITPR3 preferentially enters an inhibited state stabilized by calcium binding at a second, low-affinity cytoplasmic domain (CD) calcium binding site. Functionally, inositol 1,4,5-trisphosphate-gated calcium channel that, upon 1D-myo-inositol 1,4,5-trisphosphate binding, transports calcium from the endoplasmic reticulum lumen to cytoplasm, thus releasing the intracellular calcium and therefore participates in cellular calcium ion homeostasis. 1D-myo-inositol 1,4,5-trisphosphate binds to the ligand-free channel without altering its global conformation, yielding the low-energy resting state, then progresses through resting-to preactivated transitions to the higher energy preactivated state, which increases affinity for calcium, promoting binding of the low basal cytosolic calcium at the juxtamembrane domain (JD) site, favoring the transition through the ensemble of high-energy intermediate states along the trajectory to the fully-open activated state. Upon opening, releases calcium in the cytosol where it can bind to the low-affinity cytoplasmic domain (CD) site and stabilizes the inhibited state to terminate calcium release. This is Inositol 1,4,5-trisphosphate-gated calcium channel ITPR3 from Homo sapiens (Human).